A 233-amino-acid polypeptide reads, in one-letter code: Large ribosomal subunit protein uL1 (233 aa).

Belongs to the universal ribosomal protein uL1 family. In terms of assembly, part of the 50S ribosomal subunit.

Its function is as follows. Binds directly to 23S rRNA. The L1 stalk is quite mobile in the ribosome, and is involved in E site tRNA release. In terms of biological role, protein L1 is also a translational repressor protein, it controls the translation of the L11 operon by binding to its mRNA. This is Large ribosomal subunit protein uL1 from Marinomonas sp. (strain MWYL1).